Consider the following 232-residue polypeptide: MAKLSKRARLIREKVDVTKEYDINEAVSLLKEFATANFRESVDVAVNLGIDARKSDQNVRGATVLPNGTGREVRVAVFTQGENAEKAKAAGADIVGMEDLAAQVKAGEMNFDVVIASPDAMRVVGQLGQILGPRGLMPNPKVGTVTPDVAGAVKNAKSGQIRYRNDKNGIIHTTIGKADFEPAQLQENLESLLEALKKAKPANAKGQYLKKVSLSTTMGAGVVVNQATLTQA.

It belongs to the universal ribosomal protein uL1 family. In terms of assembly, part of the 50S ribosomal subunit.

Functionally, binds directly to 23S rRNA. The L1 stalk is quite mobile in the ribosome, and is involved in E site tRNA release. Its function is as follows. Protein L1 is also a translational repressor protein, it controls the translation of the L11 operon by binding to its mRNA. The polypeptide is Large ribosomal subunit protein uL1 (Colwellia psychrerythraea (strain 34H / ATCC BAA-681) (Vibrio psychroerythus)).